We begin with the raw amino-acid sequence, 491 residues long: Ketol-acid reductoisomerase (NADP(+)) (491 aa).

The 192-residue stretch at 17–208 (LGKCRFMSRD…GGHRAGVLES (192 aa)) folds into the KARI N-terminal Rossmann domain. NADP(+) contacts are provided by residues 45–48 (CGAQ), Arg-68, Arg-76, Ser-78, and 108–110 (DKQ). His-132 is a catalytic residue. Residue Gly-158 participates in NADP(+) binding. KARI C-terminal knotted domains lie at 209–344 (SFVA…NYPE) and 345–484 (YEGK…MTDM). Mg(2+)-binding residues include Asp-217, Glu-221, Glu-389, and Glu-393. Ser-414 contacts substrate.

It belongs to the ketol-acid reductoisomerase family. It depends on Mg(2+) as a cofactor.

It catalyses the reaction (2R)-2,3-dihydroxy-3-methylbutanoate + NADP(+) = (2S)-2-acetolactate + NADPH + H(+). It carries out the reaction (2R,3R)-2,3-dihydroxy-3-methylpentanoate + NADP(+) = (S)-2-ethyl-2-hydroxy-3-oxobutanoate + NADPH + H(+). Its pathway is amino-acid biosynthesis; L-isoleucine biosynthesis; L-isoleucine from 2-oxobutanoate: step 2/4. It participates in amino-acid biosynthesis; L-valine biosynthesis; L-valine from pyruvate: step 2/4. In terms of biological role, involved in the biosynthesis of branched-chain amino acids (BCAA). Catalyzes an alkyl-migration followed by a ketol-acid reduction of (S)-2-acetolactate (S2AL) to yield (R)-2,3-dihydroxy-isovalerate. In the isomerase reaction, S2AL is rearranged via a Mg-dependent methyl migration to produce 3-hydroxy-3-methyl-2-ketobutyrate (HMKB). In the reductase reaction, this 2-ketoacid undergoes a metal-dependent reduction by NADPH to yield (R)-2,3-dihydroxy-isovalerate. The sequence is that of Ketol-acid reductoisomerase (NADP(+)) from Proteus mirabilis (strain HI4320).